A 235-amino-acid polypeptide reads, in one-letter code: Thiamine import ATP-binding protein ThiQ (235 aa).

The region spanning 2–230 (LKLIDITWLY…QASASALLGI (229 aa)) is the ABC transporter domain. 32 to 39 (GPSGAGKS) contributes to the ATP binding site.

This sequence belongs to the ABC transporter superfamily. Thiamine importer (TC 3.A.1.19.1) family. As to quaternary structure, the complex is composed of two ATP-binding proteins (ThiQ), two transmembrane proteins (ThiP) and a solute-binding protein (ThiB).

Its subcellular location is the cell inner membrane. The enzyme catalyses thiamine(out) + ATP + H2O = thiamine(in) + ADP + phosphate + H(+). In terms of biological role, part of the ABC transporter complex ThiBPQ involved in thiamine import. Responsible for energy coupling to the transport system. Is also involved in thiamine pyrophosphate (TPP) transport. The chain is Thiamine import ATP-binding protein ThiQ from Salmonella typhimurium (strain LT2 / SGSC1412 / ATCC 700720).